Reading from the N-terminus, the 251-residue chain is Ubiquinone/menaquinone biosynthesis C-methyltransferase UbiE (251 aa).

Residues Thr-74, Asp-95, 123–124 (NA), and Ser-140 contribute to the S-adenosyl-L-methionine site.

This sequence belongs to the class I-like SAM-binding methyltransferase superfamily. MenG/UbiE family.

It catalyses the reaction a 2-demethylmenaquinol + S-adenosyl-L-methionine = a menaquinol + S-adenosyl-L-homocysteine + H(+). It carries out the reaction a 2-methoxy-6-(all-trans-polyprenyl)benzene-1,4-diol + S-adenosyl-L-methionine = a 5-methoxy-2-methyl-3-(all-trans-polyprenyl)benzene-1,4-diol + S-adenosyl-L-homocysteine + H(+). It functions in the pathway quinol/quinone metabolism; menaquinone biosynthesis; menaquinol from 1,4-dihydroxy-2-naphthoate: step 2/2. It participates in cofactor biosynthesis; ubiquinone biosynthesis. Methyltransferase required for the conversion of demethylmenaquinol (DMKH2) to menaquinol (MKH2) and the conversion of 2-polyprenyl-6-methoxy-1,4-benzoquinol (DDMQH2) to 2-polyprenyl-3-methyl-6-methoxy-1,4-benzoquinol (DMQH2). The protein is Ubiquinone/menaquinone biosynthesis C-methyltransferase UbiE of Escherichia fergusonii (strain ATCC 35469 / DSM 13698 / CCUG 18766 / IAM 14443 / JCM 21226 / LMG 7866 / NBRC 102419 / NCTC 12128 / CDC 0568-73).